The primary structure comprises 324 residues: Protein translocase subunit SecF (324 aa).

6 helical membrane passes run 16–36 (FFWA…ASLV), 145–165 (LIRS…VYIW), 174–194 (LGSV…FALF), 201–221 (TTVA…VVVF), 247–269 (TLSR…LVFG), and 276–295 (FVFA…VYMA).

This sequence belongs to the SecD/SecF family. SecF subfamily. In terms of assembly, forms a complex with SecD. Part of the essential Sec protein translocation apparatus which comprises SecA, SecYEG and auxiliary proteins SecDF-YajC and YidC.

Its subcellular location is the cell inner membrane. Functionally, part of the Sec protein translocase complex. Interacts with the SecYEG preprotein conducting channel. SecDF uses the proton motive force (PMF) to complete protein translocation after the ATP-dependent function of SecA. This is Protein translocase subunit SecF from Cereibacter sphaeroides (strain ATCC 17023 / DSM 158 / JCM 6121 / CCUG 31486 / LMG 2827 / NBRC 12203 / NCIMB 8253 / ATH 2.4.1.) (Rhodobacter sphaeroides).